A 383-amino-acid polypeptide reads, in one-letter code: PqqA peptide cyclase (383 aa).

The Radical SAM core domain occupies 11 to 226 (PGPPLWLLAE…TNQWREKLAA (216 aa)). [4Fe-4S] cluster-binding residues include cysteine 25, cysteine 29, and cysteine 32.

It belongs to the radical SAM superfamily. PqqE family. As to quaternary structure, interacts with PqqD. The interaction is necessary for activity of PqqE. It depends on [4Fe-4S] cluster as a cofactor.

It catalyses the reaction [PQQ precursor protein] + S-adenosyl-L-methionine = E-Y cross-linked-[PQQ precursor protein] + 5'-deoxyadenosine + L-methionine + H(+). Its pathway is cofactor biosynthesis; pyrroloquinoline quinone biosynthesis. Functionally, catalyzes the cross-linking of a glutamate residue and a tyrosine residue in the PqqA protein as part of the biosynthesis of pyrroloquinoline quinone (PQQ). This chain is PqqA peptide cyclase, found in Azotobacter vinelandii (strain DJ / ATCC BAA-1303).